Consider the following 201-residue polypeptide: Large ribosomal subunit protein bL12m (201 aa).

The transit peptide at 1 to 38 (MLPVAASRCLWGPRLGLRGAALRLARQQMPSVCAARQL) directs the protein to the mitochondrion. Disordered regions lie at residues 37–60 (QLRS…APKE) and 109–130 (VSAA…QKER). N6-acetyllysine occurs at positions 128, 141, 145, and 147. Position 153 is an N6-acetyllysine; alternate (Lys-153). Position 153 is an N6-succinyllysine; alternate (Lys-153). Lys-153 is covalently cross-linked (Glycyl lysine isopeptide (Lys-Gly) (interchain with G-Cter in ubiquitin)). Lys-165 carries the N6-succinyllysine modification. N6-acetyllysine is present on residues Lys-166 and Lys-176. Lys-181 is subject to N6-acetyllysine; alternate. The residue at position 181 (Lys-181) is an N6-succinyllysine; alternate. N6-acetyllysine is present on Lys-188.

Belongs to the bacterial ribosomal protein bL12 family. As to quaternary structure, component of the mitochondrial ribosome large subunit (39S) which comprises a 16S rRNA and about 50 distinct proteins. Interacts with NOA1. In terms of processing, two mature forms are produced by differential two-step proteolytic cleavage. Cleaved by the mitochondrial processing protease to produce the long mature form and subsequently by the mitochondrial intermediate protease to produce the short mature form. In the presence of CUL3, undergoes 'Lys-63'-linked ubiquitination at Lys-153 which results in proteasomal degradation.

The protein localises to the mitochondrion matrix. Functionally, as a component of the mitochondrial large ribosomal subunit, plays a role in mitochondrial translation. When present in mitochondria as a free protein not associated with the ribosome, associates with mitochondrial RNA polymerase POLRMT to activate transcription. Required for POLRMT stability. This chain is Large ribosomal subunit protein bL12m (Mrpl12), found in Mus musculus (Mouse).